The primary structure comprises 493 residues: UPF0699 transmembrane protein YdbT (493 aa).

6 helical membrane passes run 18–38, 46–66, 188–208, 232–252, 370–390, and 393–413; these read CHTIIQTIKNIILPFFFVYIV, FYGAIALGVLFIWLVAASIIK, LMAASTSGGIGVIISAVFALI, IGIYAVLIFIGLFIAWIFSIA, VIFSLFLIIPLCIFFQPWGYL, and ILLPIELLFGYLAYKEAAWTI.

This sequence belongs to the UPF0699 family.

It is found in the cell membrane. This is UPF0699 transmembrane protein YdbT (ydbT) from Bacillus subtilis (strain 168).